Here is a 494-residue protein sequence, read N- to C-terminus: Aspartyl/glutamyl-tRNA(Asn/Gln) amidotransferase subunit B (494 aa).

This sequence belongs to the GatB/GatE family. GatB subfamily. As to quaternary structure, heterotrimer of A, B and C subunits.

It catalyses the reaction L-glutamyl-tRNA(Gln) + L-glutamine + ATP + H2O = L-glutaminyl-tRNA(Gln) + L-glutamate + ADP + phosphate + H(+). The catalysed reaction is L-aspartyl-tRNA(Asn) + L-glutamine + ATP + H2O = L-asparaginyl-tRNA(Asn) + L-glutamate + ADP + phosphate + 2 H(+). Its function is as follows. Allows the formation of correctly charged Asn-tRNA(Asn) or Gln-tRNA(Gln) through the transamidation of misacylated Asp-tRNA(Asn) or Glu-tRNA(Gln) in organisms which lack either or both of asparaginyl-tRNA or glutaminyl-tRNA synthetases. The reaction takes place in the presence of glutamine and ATP through an activated phospho-Asp-tRNA(Asn) or phospho-Glu-tRNA(Gln). The chain is Aspartyl/glutamyl-tRNA(Asn/Gln) amidotransferase subunit B from Synechococcus sp. (strain CC9605).